The chain runs to 316 residues: Ornithine carbamoyltransferase (316 aa).

Residues 59–62, Gln86, Arg110, and 137–140 contribute to the carbamoyl phosphate site; these read STRT and HPCQ. Residues Asn168, Asp232, and 236-237 contribute to the L-ornithine site; that span reads SM. Carbamoyl phosphate contacts are provided by residues 273 to 274 and Arg301; that span reads CL.

Belongs to the aspartate/ornithine carbamoyltransferase superfamily. OTCase family.

It localises to the cytoplasm. It carries out the reaction carbamoyl phosphate + L-ornithine = L-citrulline + phosphate + H(+). It participates in amino-acid biosynthesis; L-arginine biosynthesis; L-arginine from L-ornithine and carbamoyl phosphate: step 1/3. In terms of biological role, reversibly catalyzes the transfer of the carbamoyl group from carbamoyl phosphate (CP) to the N(epsilon) atom of ornithine (ORN) to produce L-citrulline. The polypeptide is Ornithine carbamoyltransferase (Listeria innocua serovar 6a (strain ATCC BAA-680 / CLIP 11262)).